The primary structure comprises 160 residues: Transcription elongation factor GreA (160 aa).

Residues 1 to 72 (MAEKTYPMTL…QISSLETKIR (72 aa)) are a coiled coil.

This sequence belongs to the GreA/GreB family.

Functionally, necessary for efficient RNA polymerase transcription elongation past template-encoded arresting sites. The arresting sites in DNA have the property of trapping a certain fraction of elongating RNA polymerases that pass through, resulting in locked ternary complexes. Cleavage of the nascent transcript by cleavage factors such as GreA or GreB allows the resumption of elongation from the new 3'terminus. GreA releases sequences of 2 to 3 nucleotides. This Streptococcus sanguinis (strain SK36) protein is Transcription elongation factor GreA.